The chain runs to 124 residues: MPTIQQLVRKGRKDKATKTKTPALKGSPQRRGVCTRVYTTTPRKPNSALRKVARVKLSSQMEVTAYIPGVGHNLQEHSIVLVRGGRVADLPGVRYKIVRGALDTQGVRGRQQARSRYGAKKEKK.

The interval 1–32 (MPTIQQLVRKGRKDKATKTKTPALKGSPQRRG) is disordered. Asp89 is subject to 3-methylthioaspartic acid. Positions 105–124 (QGVRGRQQARSRYGAKKEKK) are disordered. Basic residues predominate over residues 111-124 (QQARSRYGAKKEKK).

Belongs to the universal ribosomal protein uS12 family. In terms of assembly, part of the 30S ribosomal subunit. Contacts proteins S8 and S17. May interact with IF1 in the 30S initiation complex.

In terms of biological role, with S4 and S5 plays an important role in translational accuracy. Its function is as follows. Interacts with and stabilizes bases of the 16S rRNA that are involved in tRNA selection in the A site and with the mRNA backbone. Located at the interface of the 30S and 50S subunits, it traverses the body of the 30S subunit contacting proteins on the other side and probably holding the rRNA structure together. The combined cluster of proteins S8, S12 and S17 appears to hold together the shoulder and platform of the 30S subunit. The chain is Small ribosomal subunit protein uS12 from Beutenbergia cavernae (strain ATCC BAA-8 / DSM 12333 / CCUG 43141 / JCM 11478 / NBRC 16432 / NCIMB 13614 / HKI 0122).